Reading from the N-terminus, the 735-residue chain is Mitochondrial potassium channel ATP-binding subunit (735 aa).

The transit peptide at 1 to 25 directs the protein to the mitochondrion; the sequence is MLVHLFRVGIRGGPFPGRLLPPLRF. Residues 26–144 are Mitochondrial matrix-facing; the sequence is QTFSAVRNTW…KLFWQFLHPH (119 aa). The helical transmembrane segment at 145-165 threads the bilayer; it reads LLVLGVAVVLALGAALVNVQI. Residues 150 to 437 enclose the ABC transmembrane type-1 domain; sequence VAVVLALGAA…LSVLFGQVVR (288 aa). Topologically, residues 166-195 are mitochondrial intermembrane; the sequence is PLLLGQLVEVVAKYTRDHVGSFMTESQNLS. A helical membrane pass occupies residues 196 to 216; that stretch reads THLLILYGVQGLLTFGYLVLL. Residues 217-295 are Mitochondrial matrix-facing; sequence SHVGERMAVD…SLSMLSTRLT (79 aa). The chain crosses the membrane as a helical span at residues 296–316; the sequence is LLLMVATPALMGVGTLMGSGL. The Mitochondrial intermembrane portion of the chain corresponds to 317-735; the sequence is RKLSRQCQEQ…EGPRSHQHKS (419 aa). In terms of domain architecture, ABC transporter spans 472 to 709; the sequence is VTFQNVCFSY…GGLYAELIRR (238 aa). 507–514 serves as a coordination point for ATP; that stretch reads GQSGGGKT. The interval 712–735 is disordered; it reads LDAPRTAAPPPKKPEGPRSHQHKS.

This sequence belongs to the ABC transporter superfamily. ABCB family. Multidrug resistance exporter (TC 3.A.1.201) subfamily. As to quaternary structure, the mitochondrial potassium channel (mitoK(ATP)) is composed of 4 subunits of CCDC51/MITOK and 4 subunits of ABCB8/MITOSUR. Interacts with C10orf88/PAAT. Interacts with NRP1; NRP1 regulates ABCB8/MITOSUR protein levels in mitochondria. In terms of tissue distribution, ubiquitous.

It localises to the mitochondrion inner membrane. With respect to regulation, channel activity inhibited by ATP via ABCB8/MITOSUR subunit. Its function is as follows. ATP-binding subunit of the mitochondrial ATP-gated potassium channel (mitoK(ATP)). Together with pore-forming subunit CCDC51/MITOK of the mitoK(ATP) channel, mediates ATP-dependent potassium currents across the mitochondrial inner membrane. An increase in ATP intracellular levels closes the channel, inhibiting K(+) transport, whereas a decrease in ATP levels enhances K(+) uptake in the mitochondrial matrix. Plays a role in mitochondrial iron transport. Required for maintenance of normal cardiac function, possibly by influencing mitochondrial iron export and regulating the maturation of cytosolic iron sulfur cluster-containing enzymes. This is Mitochondrial potassium channel ATP-binding subunit from Homo sapiens (Human).